Consider the following 400-residue polypeptide: Nicotinate phosphoribosyltransferase (400 aa).

H220 is subject to Phosphohistidine; by autocatalysis.

This sequence belongs to the NAPRTase family. In terms of processing, transiently phosphorylated on a His residue during the reaction cycle. Phosphorylation strongly increases the affinity for substrates and increases the rate of nicotinate D-ribonucleotide production. Dephosphorylation regenerates the low-affinity form of the enzyme, leading to product release.

It carries out the reaction nicotinate + 5-phospho-alpha-D-ribose 1-diphosphate + ATP + H2O = nicotinate beta-D-ribonucleotide + ADP + phosphate + diphosphate. It functions in the pathway cofactor biosynthesis; NAD(+) biosynthesis; nicotinate D-ribonucleotide from nicotinate: step 1/1. In terms of biological role, catalyzes the synthesis of beta-nicotinate D-ribonucleotide from nicotinate and 5-phospho-D-ribose 1-phosphate at the expense of ATP. This chain is Nicotinate phosphoribosyltransferase, found in Shigella dysenteriae serotype 1 (strain Sd197).